The primary structure comprises 254 residues: Aquaporin TIP1-2 (254 aa).

A run of 2 helical transmembrane segments spans residues 24–44 (VAEFISTLIFVFAGSGSGMAF) and 56–76 (AGLIAASLAHALALFVAVSVG). An NPA 1 motif is present at residues 85–87 (NPA). A run of 3 helical transmembrane segments spans residues 103–123 (ALVYWVAQLLGSVVACLLLKI), 144–164 (AVVLEMVMTFGLVYTVYATAV), and 173–193 (VIAPIAIGFIVGANILAGGAF). The NPA 2 motif lies at 199-201 (NPA). The chain crosses the membrane as a helical span at residues 220-240 (WVGPLAGAAIAALVYDIIFIG).

It belongs to the MIP/aquaporin (TC 1.A.8) family. TIP (TC 1.A.8.10) subfamily.

The protein localises to the vacuole membrane. Aquaporins facilitate the transport of water and small neutral solutes across cell membranes. This chain is Aquaporin TIP1-2 (TIP1-2), found in Zea mays (Maize).